Reading from the N-terminus, the 378-residue chain is Acid phosphatase-like protein XcAP-2 (378 aa).

The signal sequence occupies residues 1-19 (MKTTILLLVVLTIVQLSKA). Cystine bridges form between Cys-147-Cys-374, Cys-168-Cys-220, and Cys-347-Cys-351.

It belongs to the histidine acid phosphatase family.

It localises to the secreted. Functionally, probably modulates blood feeding of fleas on vertebrate species by binding and sequestering different mediators involved in the host response. Binds histamine. Binds leukotriene B4, leukotriene C4, leukotriene D4 and leukotriene E4. Does not bind serotonin, adrenaline, noradrenaline, ADP, and stable analogs of thromboxane A2: U-46619 and cTXA2. The polypeptide is Acid phosphatase-like protein XcAP-2 (Xenopsylla cheopis (Oriental rat flea)).